The primary structure comprises 443 residues: Protoheme IX farnesyltransferase, mitochondrial (443 aa).

Transmembrane regions (helical) follow at residues 174-194, 235-255, 257-277, 280-300, 309-329, 364-384, and 411-431; these read AAGF…LTSV, LAVS…TLGV, PLTG…YTPL, ISIA…VMGW, AGAF…FNAL, LLVL…FPIM, and LFFC…TCKR.

Belongs to the UbiA prenyltransferase family.

The protein resides in the mitochondrion membrane. The enzyme catalyses heme b + (2E,6E)-farnesyl diphosphate + H2O = Fe(II)-heme o + diphosphate. Converts protoheme IX and farnesyl diphosphate to heme O. This is Protoheme IX farnesyltransferase, mitochondrial (COX10) from Homo sapiens (Human).